Consider the following 273-residue polypeptide: Short-chain dehydrogenase fogB (273 aa).

I16, D66, R128, Y174, K178, V207, and T209 together coordinate NADP(+). The active-site Proton donor is the Y174. K178 serves as the catalytic Lowers pKa of active site Tyr.

Belongs to the short-chain dehydrogenases/reductases (SDR) family.

Functionally, short-chain dehydrogenase; part of the gene cluster that mediates the biosynthesis of flavoglaucin and congeners (including aspergin, dihydroauroglaucin and auroglaucin), prenylated salicylaldehyde derivatives carrying a saturated or an unsaturated C-7 side chain. The PKS fogA releases the carboxylic acid (8E,10E,12E)-3,5,7-trihydroxytetradeca-8,10,12-trienoic acid as its product, as well as derivatives with one and two double bonds. FogA is indeed able to reduce the initial triketide, thus being at least partially responsible for the differently saturated heptyl side chains of flavoglaucin congeners. The oxidoreductases fogB, fogC and fogD modify the nascent polyketide in fogA-bound form and, together, fogA, fogB, fogC and fogD are necessary for the formation of the aromatic core and the cyclized PKS products are released as salicyl alcohols. In particular, fogB is responsible for oxidation of a hydroxyl group or reduction of remaining double bond(s) at the C-7 residue whereas fogD is probably involved in the reductive release of the modified PKS products. The cytochrome P450 monooxygenase fogE is then responsible for the hydroxylation at C-3 of the benzene ring. The fogE products are substrates of the prenyltransferase fogH and the prenylated benzyl alcohols are subsequently oxidized by the fogF to produce the final aryl aldehydes flavoglaucin and congeners. The short-chain dehydrogenase fogG does not seem to be involved in the biosynthesis of the prenylated salicylaldehyde derivatives. The polypeptide is Short-chain dehydrogenase fogB (Aspergillus ruber (strain CBS 135680)).